A 357-amino-acid polypeptide reads, in one-letter code: tRNA-specific 2-thiouridylase MnmA (357 aa).

ATP contacts are provided by residues 7–14 and M33; that span reads GMSGGVDS. The active-site Nucleophile is C103. The cysteines at positions 103 and 200 are disulfide-linked. Residue G127 coordinates ATP. Residues 150–152 form an interaction with tRNA region; it reads KDQ. The active-site Cysteine persulfide intermediate is C200. An interaction with tRNA region spans residues 306–307; that stretch reads RY.

Belongs to the MnmA/TRMU family.

Its subcellular location is the cytoplasm. The enzyme catalyses S-sulfanyl-L-cysteinyl-[protein] + uridine(34) in tRNA + AH2 + ATP = 2-thiouridine(34) in tRNA + L-cysteinyl-[protein] + A + AMP + diphosphate + H(+). Catalyzes the 2-thiolation of uridine at the wobble position (U34) of tRNA, leading to the formation of s(2)U34. The protein is tRNA-specific 2-thiouridylase MnmA of Lachnoclostridium phytofermentans (strain ATCC 700394 / DSM 18823 / ISDg) (Clostridium phytofermentans).